The chain runs to 178 residues: 2-C-methyl-D-erythritol 2,4-cyclodiphosphate synthase (178 aa).

A divalent metal cation contacts are provided by Asp24, His26, and His61. 24–26 is a 4-CDP-2-C-methyl-D-erythritol 2-phosphate binding site; the sequence is DSH. 150–153 is a 4-CDP-2-C-methyl-D-erythritol 2-phosphate binding site; that stretch reads TSGE.

This sequence belongs to the IspF family. As to quaternary structure, homotrimer. A divalent metal cation serves as cofactor.

It catalyses the reaction 4-CDP-2-C-methyl-D-erythritol 2-phosphate = 2-C-methyl-D-erythritol 2,4-cyclic diphosphate + CMP. It functions in the pathway isoprenoid biosynthesis; isopentenyl diphosphate biosynthesis via DXP pathway; isopentenyl diphosphate from 1-deoxy-D-xylulose 5-phosphate: step 4/6. Its function is as follows. Involved in the biosynthesis of isopentenyl diphosphate (IPP) and dimethylallyl diphosphate (DMAPP), two major building blocks of isoprenoid compounds. Catalyzes the conversion of 4-diphosphocytidyl-2-C-methyl-D-erythritol 2-phosphate (CDP-ME2P) to 2-C-methyl-D-erythritol 2,4-cyclodiphosphate (ME-CPP) with a corresponding release of cytidine 5-monophosphate (CMP). The sequence is that of 2-C-methyl-D-erythritol 2,4-cyclodiphosphate synthase from Chlamydia trachomatis serovar A (strain ATCC VR-571B / DSM 19440 / HAR-13).